The sequence spans 209 residues: MQSKFIVIEGLDGAGKSTAISFVRKYLEKNNLAAIYTREPGGTKIAEELRNLVLHNKYDEEIHSDSELLMIYAGRVQHYRNLIAPALEKGINVVSDRFYWSSMAYQGGGRGVELSKIRALNNNFLNGCEPDLVIYLDIDPILGLQRAQKVGSPDRIEKAGLEFFNRTRKVFKDLVKDLDNAIEIDAAKSIQEVEKQIYLILDKHFNFQN.

10-17 (GLDGAGKS) contributes to the ATP binding site.

This sequence belongs to the thymidylate kinase family.

It carries out the reaction dTMP + ATP = dTDP + ADP. Phosphorylation of dTMP to form dTDP in both de novo and salvage pathways of dTTP synthesis. The polypeptide is Thymidylate kinase (Francisella tularensis subsp. holarctica (strain OSU18)).